The chain runs to 444 residues: Phosphoglucosamine mutase (444 aa).

The active-site Phosphoserine intermediate is S102. The Mg(2+) site is built by S102, D239, D241, and D243. S102 is subject to Phosphoserine.

It belongs to the phosphohexose mutase family. It depends on Mg(2+) as a cofactor. In terms of processing, activated by phosphorylation.

It carries out the reaction alpha-D-glucosamine 1-phosphate = D-glucosamine 6-phosphate. Catalyzes the conversion of glucosamine-6-phosphate to glucosamine-1-phosphate. The chain is Phosphoglucosamine mutase from Saccharopolyspora erythraea (strain ATCC 11635 / DSM 40517 / JCM 4748 / NBRC 13426 / NCIMB 8594 / NRRL 2338).